A 216-amino-acid chain; its full sequence is Thiosulfate dehydrogenase electron acceptor (216 aa).

The signal sequence occupies residues 1 to 22 (MKSIHWPLAGVAALLLSMQAQA). 2 Cytochrome c domains span residues 23 to 108 (ADGQ…EAMP) and 118 to 210 (SEAA…ANVG). Positions 41, 44, 45, 141, 144, and 145 each coordinate heme c.

In terms of processing, binds 2 heme c groups covalently per subunit.

Functionally, acts as an electron acceptor for the thiosulfate dehydrogenase TsdA. This is Thiosulfate dehydrogenase electron acceptor (tsdB) from Stutzerimonas stutzeri (strain A1501) (Pseudomonas stutzeri).